The sequence spans 653 residues: Zinc finger protein 59 (653 aa).

Positions valine 14–proline 86 constitute a KRAB domain. 16 consecutive C2H2-type zinc fingers follow at residues tyrosine 172–histidine 194, tyrosine 200–histidine 222, phenylalanine 256–histidine 278, tyrosine 284–histidine 306, phenylalanine 312–histidine 334, phenylalanine 340–histidine 362, phenylalanine 368–histidine 390, leucine 396–histidine 418, phenylalanine 424–histidine 446, tyrosine 452–histidine 474, phenylalanine 480–histidine 502, phenylalanine 508–histidine 530, phenylalanine 536–histidine 558, tyrosine 564–histidine 586, phenylalanine 592–histidine 614, and phenylalanine 620–histidine 642.

The protein belongs to the krueppel C2H2-type zinc-finger protein family. As to expression, expressed predominantly in the testis (at protein level).

It is found in the nucleus. May have a role during differentiation processes. The protein is Zinc finger protein 59 (Zfp59) of Mus musculus (Mouse).